The sequence spans 102 residues: uncharacterized protein (102 aa).

This is an uncharacterized protein from Bacillus subtilis (strain 168).